Reading from the N-terminus, the 202-residue chain is LexA repressor (202 aa).

The segment at residues Arg-28 to Lys-48 is a DNA-binding region (H-T-H motif). Residues Ser-119 and Lys-156 each act as for autocatalytic cleavage activity in the active site.

It belongs to the peptidase S24 family. In terms of assembly, homodimer.

The enzyme catalyses Hydrolysis of Ala-|-Gly bond in repressor LexA.. Its function is as follows. Represses a number of genes involved in the response to DNA damage (SOS response), including recA and lexA. Binds to the 16 bp palindromic sequence 5'-CTGTATATATATACAG-3'. In the presence of single-stranded DNA, RecA interacts with LexA causing an autocatalytic cleavage which disrupts the DNA-binding part of LexA, leading to derepression of the SOS regulon and eventually DNA repair. In Klebsiella pneumoniae subsp. pneumoniae (strain ATCC 700721 / MGH 78578), this protein is LexA repressor.